The following is a 287-amino-acid chain: Rhomboid-like protein 18 (287 aa).

Transmembrane regions (helical) follow at residues 10 to 30 (NAPVTKAFVIATALFTVFFGI), 53 to 73 (LIISAFAFSSTTQLLSGLYLL), 90 to 110 (VFIFFSGFVSLILETILLSLT), 117 to 137 (LLTSGPYALVFASFVPFFLDI), 145 to 165 (VLGVHFSDKSFIYLAGVQLLL), and 172 to 192 (IFTGICGIIAGSLYRLNIFGI). In terms of domain architecture, UBA spans 244 to 284 (EPSEEAIATLVSMGFDQNAARQALVHARNDVNAATNILLEA).

It belongs to the peptidase S54 family.

Its subcellular location is the membrane. Its function is as follows. Probable rhomboid-type serine protease that catalyzes intramembrane proteolysis. In Arabidopsis thaliana (Mouse-ear cress), this protein is Rhomboid-like protein 18.